The primary structure comprises 802 residues: ATP-dependent zinc metalloprotease FTSH 7, chloroplastic (802 aa).

The N-terminal 55 residues, 1–55, are a transit peptide targeting the chloroplast; that stretch reads MTTTFEFLQPRIHGFATCCSSNSLLYSKASRFFNDRCRVYRQNPNRFVSNSITLP. Residues 87–117 are disordered; the sequence is CQEDDQNESSSEEEESSQSTPAKSERKREKK. A compositionally biased stretch (acidic residues) spans 88-102; it reads QEDDQNESSSEEEES. A run of 2 helical transmembrane segments spans residues 134 to 154 and 268 to 288; these read IIQA…MFVM and GGFF…AGLI. Position 365–372 (365–372) interacts with ATP; sequence GLPGTGKT. Zn(2+) is bound at residue H590. E591 is an active-site residue. H594 and D673 together coordinate Zn(2+).

This sequence in the N-terminal section; belongs to the AAA ATPase family. It in the C-terminal section; belongs to the peptidase M41 family. It depends on Zn(2+) as a cofactor.

Its subcellular location is the plastid. It is found in the chloroplast thylakoid membrane. Probable ATP-dependent zinc metallopeptidase. This is ATP-dependent zinc metalloprotease FTSH 7, chloroplastic (FTSH7) from Arabidopsis thaliana (Mouse-ear cress).